A 3021-amino-acid chain; its full sequence is Genome polyprotein (3021 aa).

Serine 2 is modified (N-acetylserine; by host). Residues 2–23 (STLPKPQRKTKRNTIRRPQDVK) form an interaction with STAT1 region. An interaction with EIF2AK2/PKR region spans residues 2 to 58 (STLPKPQRKTKRNTIRRPQDVKFPGGGVIYVGVYVLPRRGPRLGVRATRKTSERSQP). The segment at 2–59 (STLPKPQRKTKRNTIRRPQDVKFPGGGVIYVGVYVLPRRGPRLGVRATRKTSERSQPR) is interaction with DDX3X. The segment at 2–75 (STLPKPQRKT…PKARRSEGRS (74 aa)) is disordered. Residues 2-168 (STLPKPQRKT…EDGINFATGN (167 aa)) lie on the Cytoplasmic side of the membrane. Short sequence motifs (nuclear localization signal) lie at residues 5–13 (PKPQRKTKR) and 38–43 (PRRGPR). Positions 7 to 16 (PQRKTKRNTI) are enriched in basic residues. The residue at position 53 (serine 53) is a Phosphoserine; by host. Short sequence motifs (nuclear localization signal) lie at residues 58–64 (PRGRRKP) and 66–71 (PKARRS). A compositionally biased stretch (basic residues) spans 58–68 (PRGRRKPIPKA). Serine 99 and serine 116 each carry phosphoserine; by host. The interval 112 to 152 (PRRRSRNLGKVIDTLTCGFADLMGYIPLVGAPLGGAARALA) is important for endoplasmic reticulum and mitochondrial localization. An interaction with APOA2 region spans residues 122 to 173 (VIDTLTCGFADLMGYIPLVGAPLGGAARALAHGVRALEDGINFATGNLPGCS). The segment at 164-167 (FATG) is important for lipid droplets localization. A helical membrane pass occupies residues 169–189 (LPGCSFSIFLLALFSCLIHPA). The propeptide at 178–191 (LLALFSCLIHPAAS) is ER anchor for the core protein, removed in mature form by host signal peptidase. Residues 190–358 (ASLEWRNTSG…AGAHWGIIAG (169 aa)) are Lumenal-facing. 3 N-linked (GlcNAc...) asparagine; by host glycosylation sites follow: asparagine 196, asparagine 209, and asparagine 234. Positions 265-296 (LVGAGTMCSALYVGDMCGPVFLVGQAFTFRPR) are important for fusion. Asparagine 305 is a glycosylation site (N-linked (GlcNAc...) asparagine; by host). A helical membrane pass occupies residues 359–379 (LAYYSMQGNWAKVAIIMVMFS). Residues 380-731 (GVDASTHVTA…WEFVILIFLL (352 aa)) lie on the Lumenal side of the membrane. Residues 385 to 412 (THVTAGQAARNAYGITSLFSVGAKQNLQ) are HVR1. Residues asparagine 417, asparagine 423, and asparagine 430 are each glycosylated (N-linked (GlcNAc...) (high mannose) asparagine; by host). 4 disulfide bridges follow: cysteine 429-cysteine 553, cysteine 452-cysteine 459, cysteine 487-cysteine 495, and cysteine 504-cysteine 509. Asparagine 448 carries N-linked (GlcNAc...) asparagine; by host glycosylation. The tract at residues 475 to 479 (ANITG) is HVR2. Asparagine 476 carries an N-linked (GlcNAc...) asparagine; by host glycan. Residues 481 to 494 (SDDKPYCWHYAPRP) are CD81-binding 1. Asparagine 533 carries N-linked (GlcNAc...) asparagine; by host glycosylation. A CD81-binding 2 region spans residues 545 to 552 (PPSGRWFG). Residue asparagine 557 is glycosylated (N-linked (GlcNAc...) asparagine; by host). 4 cysteine pairs are disulfide-bonded: cysteine 565/cysteine 570, cysteine 587/cysteine 591, cysteine 603/cysteine 626, and cysteine 613/cysteine 650. 2 N-linked (GlcNAc...) (high mannose) asparagine; by host glycosylation sites follow: asparagine 629 and asparagine 651. Cysteines 658 and 683 form a disulfide. Residues 666–677 (SEQHPLLHSTTE) form a PKR/eIF2-alpha phosphorylation homology domain (PePHD) region. The chain crosses the membrane as a helical span at residues 732–752 (LADARVCVALWLILTISQAEA). The Lumenal segment spans residues 753-763 (ALENLVTLNAV). Residues 764 to 784 (AAAGTHGIGWYLVAFCAAWYV) traverse the membrane as a helical segment. At 785 to 787 (RGK) the chain is on the cytoplasmic side. Residues 788 to 809 (LVPLVTYSLTGLWSLALLVLLL) form a helical membrane-spanning segment. The Lumenal segment spans residues 810–819 (PQRAYAWSGE). The chain crosses the membrane as a helical span at residues 820–840 (DSATLGAGILVLFGFFTLSPW). Residues 841-844 (YKHW) lie on the Cytoplasmic side of the membrane. Residues 845–864 (IARLIWWNQYTICRCESALH) form a helical membrane-spanning segment. Residues 865–887 (VWVPPLLARGGRDGVILLTSLLY) lie on the Lumenal side of the membrane. Residues 888–908 (PSLIFDITKLLIAALGPLYLI) form a helical membrane-spanning segment. In terms of domain architecture, Peptidase C18 spans 905-1032 (LYLIQATITA…DYREMGWRLL (128 aa)). The Cytoplasmic segment spans residues 909–1663 (QATITATPYF…CMSADLEVTT (755 aa)). The protease NS2-3 stretch occupies residues 910-1212 (ATITATPYFV…PVETLSTQAR (303 aa)). Cysteine 928 carries S-palmitoyl cysteine; by host lipidation. An interaction with host SCPS1 region spans residues 935–955 (MGGKYFQMIILSLADGSNTYL). Active-site for protease NS2 activity; shared with dimeric partner residues include histidine 958, glutamate 978, and cysteine 999. Residues 1033–1214 (APITAYAQQT…ETLSTQARSP (182 aa)) form the Peptidase S29 domain. Active-site charge relay system; for serine protease NS3 activity residues include histidine 1089 and aspartate 1113. Cysteine 1129 and cysteine 1131 together coordinate Zn(2+). Serine 1171 functions as the Charge relay system; for serine protease NS3 activity in the catalytic mechanism. Zn(2+) is bound by residues cysteine 1177 and histidine 1181. The region spanning 1223 to 1375 (PAVPQSYQVG…SNIEEVALGS (153 aa)) is the Helicase ATP-binding domain. An ATP-binding site is contributed by 1236 to 1243 (APTGSGKS). Mg(2+) is bound at residue serine 1243. Positions 1322 to 1325 (DDCH) match the DECH box motif. Residues 1382–1544 (YGKAIPIACI…DLQPAETTVR (163 aa)) form the Helicase C-terminal domain. Positions 1492–1504 (QRRGRTGRGRLGT) are RNA-binding. A helical membrane pass occupies residues 1664–1684 (STWVLLGGVLAAVAAYCLSVG). The interval 1685–1696 (CVVIVGHIELGG) is NS3-binding. Topologically, residues 1685–1811 (CVVIVGHIEL…SVTSPLTTNQ (127 aa)) are cytoplasmic. The chain crosses the membrane as a helical span at residues 1812–1830 (TMFFNILGGWVATHLAGPQ). At 1831-1834 (ASSA) the chain is on the lumenal side. Residues 1835–1855 (FVVSGLAGAAIGGIGLGRVLL) form a helical membrane-spanning segment. Residue aspartate 1856 is a topological domain, cytoplasmic. Residues 1857–1877 (ILAGYGAGVSGALVAFKIMGG) form a helical membrane-spanning segment. Residues 1878 to 1887 (EPPTTEDMVN) lie on the Lumenal side of the membrane. A helical membrane pass occupies residues 1888–1908 (LLPAILSPGALVVGVICAAIL). Residues 1909 to 1978 (RRHVGPGEGP…WINEDYPSPC (70 aa)) are Cytoplasmic-facing. A lipid anchor (S-palmitoyl cysteine; by host) is attached at cysteine 1978. The stretch at 1979 to 2008 (SGDWLRIIWDWVCSVVSDFKTWLSAKIMPA) is an intramembrane region. Topologically, residues 2009-3000 (LPGLPFISCQ…YHSVSRARTR (992 aa)) are cytoplasmic. The Zn(2+) site is built by cysteine 2017, cysteine 2035, cysteine 2037, and cysteine 2058. Residues 2126 to 2214 (EFFTEVDGVR…ASSSASQLSA (89 aa)) are FKBP8-binding. Residues 2126–2338 (EFFTEVDGVR…PVPPPRRKRT (213 aa)) form a transcriptional activation region. Residues 2141–2145 (PPCRP) are interaction with non-structural protein 4A. Residues 2193 to 2215 (ARRLARGSPPSEASSSASQLSAP) are disordered. An interaction with host SKP2 region spans residues 2195 to 2448 (RLARGSPPSE…ALITPCSAEE (254 aa)). Serine 2200, serine 2203, serine 2207, serine 2210, serine 2213, and serine 2216 each carry phosphoserine; by host. The segment covering 2200–2215 (SPPSEASSSASQLSAP) has biased composition (low complexity). Residues 2216–2255 (SLKATCQTHRPHPDAELVDANLLWRQEMGSNITRVESETK) form an ISDR region. The interaction with EIF2AK2/PKR stretch occupies residues 2216 to 2281 (SLKATCQTHR…AELSAAAECF (66 aa)). Residues 2255–2312 (KVVILDSFEPLRAETDDAELSAAAECFKKPPKYPPALPIWARPDYNPPLLDRWKSPDY) are NS4B-binding. The tract at residues 2305-2383 (DRWKSPDYVP…DTQSSTASKV (79 aa)) is V3. Disordered regions lie at residues 2318 to 2338 (HGCA…RKRT) and 2356 to 2419 (KSFP…WSTV). Positions 2328-2331 (PPVP) match the SH3-binding motif. The Nuclear localization signal motif lies at 2333–2341 (PRRKRTIQL). Lysine 2356 participates in a covalent cross-link: Glycyl lysine isopeptide (Lys-Gly) (interchain with G-Cter in ubiquitin). Positions 2359–2381 (PSSKPQEENSSSSGVDTQSSTAS) are enriched in low complexity. Phosphoserine; by host occurs at positions 2459 and 2472. Positions 2644–2762 (PLGFSYDTRC…VAESDGVDED (119 aa)) constitute a RdRp catalytic domain. Mg(2+) is bound by residues aspartate 2650, aspartate 2748, and aspartate 2749. The chain crosses the membrane as a helical span at residues 3001–3021 (YLLLCLLLLTVGVGIFLLPAR).

It belongs to the hepacivirus polyprotein family. In terms of assembly, homooligomer. Interacts with E1 (via C-terminus). Interacts with the non-structural protein 5A. Interacts (via N-terminus) with host STAT1 (via SH2 domain); this interaction results in decreased STAT1 phosphorylation and ubiquitin-mediated proteasome-dependent STAT1 degradation, leading to decreased IFN-stimulated gene transcription. Interacts with host STAT3; this interaction constitutively activates STAT3. Interacts with host LTBR receptor. Interacts with host TNFRSF1A receptor and possibly induces apoptosis. Interacts with host HNRPK. Interacts with host YWHAE. Interacts with host UBE3A/E6AP. Interacts with host DDX3X. Interacts with host APOA2. Interacts with host RXRA protein. Interacts with host SP110 isoform 3/Sp110b; this interaction sequesters the transcriptional corepressor SP110 away from the nucleus. Interacts with host CREB3 nuclear transcription protein; this interaction triggers cell transformation. Interacts with host ACY3. Interacts with host C1QR1. Interacts with host RBM24; this interaction, which enhances the interaction of the mature core protein with 5'-UTR, may inhibit viral translation and favor replication. Interacts with host EIF2AK2/PKR; this interaction induces the autophosphorylation of EIF2AK2. Part of the viral assembly initiation complex composed of NS2, E1, E2, NS3, NS4A, NS5A and the mature core protein. As to quaternary structure, forms a heterodimer with envelope glycoprotein E2. Interacts with mature core protein. Interacts with protease NS2. The heterodimer E1/E2 interacts with host CLDN1; this interaction plays a role in viral entry into host cell. Interacts with host SPSB2 (via C-terminus). Part of the viral assembly initiation complex composed of NS2, E1, E2, NS3, NS4A, NS5A and the mature core protein. Interacts with host NEURL3; this interaction prevents E1 binding to glycoprotein E2. Forms a heterodimer with envelope glycoprotein E1. Interacts with host CD81 and SCARB1 receptors; these interactions play a role in viral entry into host cell. Interacts with host EIF2AK2/PKR; this interaction inhibits EIF2AK2 and probably allows the virus to evade the innate immune response. Interacts with host CD209/DC-SIGN and CLEC4M/DC-SIGNR. Interact with host SPCS1; this interaction is essential for viral particle assembly. Interacts with protease NS2. The heterodimer E1/E2 interacts with host CLDN1; this interaction plays a role in viral entry into host cell. Part of the viral assembly initiation complex composed of NS2, E1, E2, NS3, NS4A, NS5A and the mature core protein. Interacts with host SLC3A2/4F2hc; the interaction may facilitate viral entry into host cell. Interacts with human PLSCR1. In terms of assembly, homohexamer. Homoheptamer. Interacts with protease NS2. As to quaternary structure, homodimer. Interacts with host SPCS1; this interaction is essential for viral particle assembly. Interacts with envelope glycoprotein E1. Interacts with envelope glycoprotein E2. Interacts with viroporin p7. Interacts with serine protease/helicase NS3. Part of the replication complex composed of NS2, NS3, NS4A, NS4B, NS5A and the RNA-directed RNA polymerase embedded in an ER-derived membranous web. Part of the viral assembly initiation complex composed of NS2, E1, E2, NS3, NS4A, NS5A and the mature core protein. Interacts with protease NS2. Interacts with non-structural protein 4A; this interaction stabilizes the folding of NS3 serine protease. NS3-NS4A interaction is essential for NS3 activation and allows membrane anchorage of the latter. NS3/NS4A complex also prevents phosphorylation of host IRF3, thus preventing the establishment of dsRNA induced antiviral state. Interacts with host MAVS; this interaction leads to the cleavage and inhibition of host MAVS. Interacts with host TICAM1; this interaction leads to the cleavage and inhibition of host TICAM1. Interacts with host TANK-binding kinase/TBK1; this interaction results in the inhibition of the association between TBK1 and IRF3, which leads to the inhibition of IRF3 activation. Interacts with host RBM24. Part of the replication complex composed of NS2, NS3, NS4A, NS4B, NS5A and the RNA-directed RNA polymerase embedded in an ER-derived membranous web. Part of the viral assembly initiation complex composed of NS2, E1, E2, NS3, NS4A, NS5A and the mature core protein. In terms of assembly, interacts with NS3 serine protease; this interaction stabilizes the folding of NS3 serine protease. NS3-NS4A interaction is essential for NS3 activation and allows membrane anchorage of the latter. Interacts with non-structural protein 5A (via N-terminus). Part of the replication complex composed of NS2, NS3, NS4A, NS4B, NS5A and the RNA-directed RNA polymerase embedded in an ER-derived membranous web. Part of the viral assembly initiation complex composed of NS2, E1, E2, NS3, NS4A, NS5A and the mature core protein. As to quaternary structure, homomultimer. Interacts with non-structural protein NS5A. Interacts with host PLA2G4C; this interaction likely initiates the recruitment of replication complexes to lipid droplets. Interacts with host STING; this interaction disrupts the interaction between STING and TBK1 thereby suppressing the interferon signaling. Part of the replication complex composed of NS2, NS3, NS4A, NS4B, NS5A and the RNA-directed RNA polymerase embedded in an ER-derived membranous web. Monomer. Homodimer; dimerization is required for RNA-binding. Interacts with the mature core protein. Interacts (via N-terminus) with non-structural protein 4A. Interacts with non-structural protein 4B. Interacts (via region D2) with RNA-directed RNA polymerase. Part of the viral assembly initiation complex composed of NS2, E1, E2, NS3, NS4A, NS5A and the mature core protein. Part of the replication complex composed of NS2, NS3, NS4A, NS4B, NS5A and the RNA-directed RNA polymerase embedded in an ER-derived membranous web. Interacts with host GRB2. Interacts with host BIN1. Interacts with host PIK3R1. Interacts with host SRCAP. Interacts with host FKBP8. Interacts (via C-terminus) with host VAPB (via MSP domain). Interacts with host EIF2AK2/PKR; this interaction leads to disruption of EIF2AK2 dimerization by NS5A and probably allows the virus to evade the innate immune response. Interacts (via N-terminus) with host PACSIN2 (via N-terminus); this interaction attenuates protein kinase C alpha-mediated phosphorylation of PACSIN2 by disrupting the interaction between PACSIN2 and PRKCA. Interacts (via N-terminus) with host SRC kinase (via SH2 domain). Interacts with most Src-family kinases. Interacts with host IFI27 and SKP2; promotes the ubiquitin-mediated proteasomal degradation of NS5A. Interacts with host GPS2. Interacts with host TNFRSF21; this interaction allows the modulation by the virus of JNK, p38 MAPK, STAT3, and Akt signaling pathways in a DR6-dependent manner. Interacts (via N-terminus) with host CIDEB (via N-terminus); this interaction seems to regulate the association of HCV particles with APOE. Interacts with host CHKA/Choline Kinase-alpha; CHKA bridges host PI4KA and NS5A and potentiates NS5A-stimulated PI4KA activity, which then facilitates the targeting of the ternary complex to the ER for viral replication. Interacts with host SPSB2 (via C-terminus); this interaction targets NS5A for ubiquitination and degradation. Interacts with host RAB18; this interaction may promote the association of NS5A and other replicase components with lipid droplets. Interacts (via region D2) with host PPIA/CYPA; the interaction stimulates RNA-binding ability of NS5A and is dependent on the peptidyl-prolyl cis-trans isomerase activity of PPIA/CYPA. Interacts with host TRIM14; this interaction induces the degradation of NS5A. In terms of assembly, homooligomer. Interacts with non-structural protein 5A. Interacts with host VAPB. Interacts with host PRK2/PKN2. Interacts with host HNRNPA1 and SEPT6; these interactions facilitate viral replication. Part of the replication complex composed of NS2, NS3, NS4A, NS4B, NS5A and the RNA-directed RNA polymerase. Requires Zn(2+) as cofactor. Mg(2+) is required as a cofactor. Specific enzymatic cleavages in vivo yield mature proteins. The structural proteins, core, E1, E2 and p7 are produced by proteolytic processing by host signal peptidases. The core protein precursor is synthesized as a 23 kDa, which is retained in the ER membrane through the hydrophobic signal peptide. Cleavage by the signal peptidase releases the 21 kDa mature core protein. The cleavage of the core protein precursor occurs between aminoacids 176 and 188 but the exact cleavage site is not known. Some degraded forms of the core protein appear as well during the course of infection. The other proteins (p7, NS2, NS3, NS4A, NS4B, NS5A and NS5B) are cleaved by the viral proteases. Autoprocessing between NS2 and NS3 is mediated by the NS2 cysteine protease catalytic domain and regulated by the NS3 N-terminal domain. Post-translationally, phosphorylated by host PKC and PKA. In terms of processing, ubiquitinated; mediated by UBE3A and leading to core protein subsequent proteasomal degradation. Highly N-glycosylated. Post-translationally, palmitoylation is required for NS2/3 autoprocessing and E2 recruitment to membranes. In terms of processing, palmitoylated. This modification may play a role in its polymerization or in protein-protein interactions. Phosphorylated on serines in a basal form termed p56. p58 is a hyperphosphorylated form of p56. p56 and p58 coexist in the cell in roughly equivalent amounts. Hyperphosphorylation is dependent on the presence of NS4A. Host CSNK1A1/CKI-alpha or RPS6KB1 kinases may be responsible for NS5A phosphorylation. Post-translationally, tyrosine phosphorylation is essential for the interaction with host SRC. In terms of processing, ubiquitinated. Ubiquitination, most probably at Lys-2356, mediated by host IFI27 and SKP2 leads to proteasomal degradation, restricting viral infection. Ubiquitination by host TRIM22 leads to interruption of viral replication. The N-terminus is phosphorylated by host PRK2/PKN2.

The protein localises to the host endoplasmic reticulum membrane. It is found in the host mitochondrion membrane. Its subcellular location is the virion. The protein resides in the host cytoplasm. It localises to the host nucleus. The protein localises to the host lipid droplet. It is found in the virion membrane. Its subcellular location is the host mitochondrion. The protein resides in the host cell membrane. It localises to the host perinuclear region. The catalysed reaction is Hydrolysis of four peptide bonds in the viral precursor polyprotein, commonly with Asp or Glu in the P6 position, Cys or Thr in P1 and Ser or Ala in P1'.. It catalyses the reaction a ribonucleoside 5'-triphosphate + H2O = a ribonucleoside 5'-diphosphate + phosphate + H(+). The enzyme catalyses ATP + H2O = ADP + phosphate + H(+). It carries out the reaction RNA(n) + a ribonucleoside 5'-triphosphate = RNA(n+1) + diphosphate. Its activity is regulated as follows. Inhibited by the antiviral drug hexamethylene amiloride. Inhibition by amantadine appears to be genotype-dependent. Also inhibited by long-alkyl-chain iminosugar derivatives. Activity is up-regulated by PRK2/PKN2-mediated phosphorylation. Its function is as follows. Packages viral RNA to form a viral nucleocapsid, and promotes virion budding. Participates in the viral particle production as a result of its interaction with the non-structural protein 5A. Binds RNA and may function as a RNA chaperone to induce the RNA structural rearrangements taking place during virus replication. Modulates viral translation initiation by interacting with viral IRES and 40S ribosomal subunit. Affects various cell signaling pathways, host immunity and lipid metabolism. Prevents the establishment of cellular antiviral state by blocking the interferon-alpha/beta (IFN-alpha/beta) and IFN-gamma signaling pathways and by blocking the formation of phosphorylated STAT1 and promoting ubiquitin-mediated proteasome-dependent degradation of STAT1. Activates STAT3 leading to cellular transformation. Regulates the activity of cellular genes, including c-myc and c-fos. May repress the promoter of p53, and sequester CREB3 and SP110 isoform 3/Sp110b in the cytoplasm. Represses cell cycle negative regulating factor CDKN1A, thereby interrupting an important check point of normal cell cycle regulation. Targets transcription factors involved in the regulation of inflammatory responses and in the immune response: suppresses TNF-induced NF-kappa-B activation, and activates AP-1. Binds to dendritic cells (DCs) via C1QR1, resulting in down-regulation of T-lymphocytes proliferation. Alters lipid metabolism by interacting with hepatocellular proteins involved in lipid accumulation and storage. Induces up-regulation of FAS promoter activity, and thereby contributes to the increased triglyceride accumulation in hepatocytes (steatosis). Forms a heterodimer with envelope glycoprotein E2, which mediates virus attachment to the host cell, virion internalization through clathrin-dependent endocytosis and fusion with host membrane. Fusion with the host cell is most likely mediated by both E1 and E2, through conformational rearrangements of the heterodimer required for fusion rather than a classical class II fusion mechanism. E1/E2 heterodimer binds host apolipoproteins such as APOB and ApoE thereby forming a lipo-viro-particle (LVP). APOE associated to the LVP allows the initial virus attachment to cell surface receptors such as the heparan sulfate proteoglycans (HSPGs), syndecan-1 (SDC1), syndecan-1 (SDC2), the low-density lipoprotein receptor (LDLR) and scavenger receptor class B type I (SCARB1). The cholesterol transfer activity of SCARB1 allows E2 exposure and binding of E2 to SCARB1 and the tetraspanin CD81. E1/E2 heterodimer binding on CD81 activates the epithelial growth factor receptor (EGFR) signaling pathway. Diffusion of the complex E1-E2-EGFR-SCARB1-CD81 to the cell lateral membrane allows further interaction with Claudin 1 (CLDN1) and occludin (OCLN) to finally trigger HCV entry. In terms of biological role, forms a heterodimer with envelope glycoprotein E1, which mediates virus attachment to the host cell, virion internalization through clathrin-dependent endocytosis and fusion with host membrane. Fusion with the host cell is most likely mediated by both E1 and E2, through conformational rearrangements of the heterodimer required for fusion rather than a classical class II fusion mechanism. The interaction between envelope glycoprotein E2 and host apolipoprotein E/APOE allows the proper assembly, maturation and infectivity of the viral particles. This interaction is probably promoted via the up-regulation of cellular autophagy by the virus. E1/E2 heterodimer binds host apolipoproteins such as APOB and APOE thereby forming a lipo-viro-particle (LVP). APOE associated to the LVP allows the initial virus attachment to cell surface receptors such as the heparan sulfate proteoglycans (HSPGs), syndecan-1 (SDC1), syndecan-1 (SDC2), the low-density lipoprotein receptor (LDLR) and scavenger receptor class B type I (SCARB1). The cholesterol transfer activity of SCARB1 allows E2 exposure and binding of E2 to SCARB1 and the tetraspanin CD81. E1/E2 heterodimer binding on CD81 activates the epithelial growth factor receptor (EGFR) signaling pathway. Diffusion of the complex E1-E2-EGFR-SCARB1-CD81 to the cell lateral membrane allows further interaction with Claudin 1 (CLDN1) and occludin (OCLN) to finally trigger HCV entry. Inhibits host EIF2AK2/PKR activation, preventing the establishment of an antiviral state. Viral ligand for CD209/DC-SIGN and CLEC4M/DC-SIGNR, which are respectively found on dendritic cells (DCs), and on liver sinusoidal endothelial cells and macrophage-like cells of lymph node sinuses. These interactions allow the capture of circulating HCV particles by these cells and subsequent facilitated transmission to permissive cells such as hepatocytes and lymphocyte subpopulations. The interaction between E2 and host amino acid transporter complex formed by SLC3A2 and SLC7A5/LAT1 may facilitate viral entry into host cell. Functionally, ion channel protein that acts as a viroporin and plays an essential role in the assembly, envelopment and secretion of viral particles. Regulates the host cell secretory pathway, which induces the intracellular retention of viral glycoproteins and favors assembly of viral particles. Creates a pore in acidic organelles and releases Ca(2+) and H(+) in the cytoplasm of infected cells, leading to a productive viral infection. High levels of cytoplasmic Ca(2+) may trigger membrane trafficking and transport of viral ER-associated proteins to viroplasms, sites of viral genome replication. This ionic imbalance induces the assembly of the inflammasome complex, which triggers the maturation of pro-IL-1beta into IL-1beta through the action of caspase-1. Targets also host mitochondria and induces mitochondrial depolarization. In addition of its role as a viroporin, acts as a lipid raft adhesion factor. Its function is as follows. Cysteine protease required for the proteolytic auto-cleavage between the non-structural proteins NS2 and NS3. The N-terminus of NS3 is required for the function of NS2 protease (active region NS2-3). Promotes the initiation of viral particle assembly by mediating the interaction between structural and non-structural proteins. Displays three enzymatic activities: serine protease with a chymotrypsin-like fold, NTPase and RNA helicase. NS3 serine protease, in association with NS4A, is responsible for the cleavages of NS3-NS4A, NS4A-NS4B, NS4B-NS5A and NS5A-NS5B. The NS3/NS4A complex prevents phosphorylation of host IRF3, thus preventing the establishment of dsRNA induced antiviral state. The NS3/NS4A complex induces host amino acid transporter component SLC3A2, thus contributing to HCV propagation. NS3 RNA helicase binds to RNA and unwinds both dsDNA and dsRNA in the 3' to 5' direction, and likely resolves RNA complicated stable secondary structures in the template strand. Binds a single ATP and catalyzes the unzipping of a single base pair of dsRNA. Inhibits host antiviral proteins TBK1 and IRF3 thereby preventing the establishment of an antiviral state. Cleaves host MAVS/CARDIF thereby preventing the establishment of an antiviral state. Cleaves host TICAM1/TRIF, thereby disrupting TLR3 signaling and preventing the establishment of an antiviral state. In terms of biological role, peptide cofactor which forms a non-covalent complex with the N-terminal of NS3 serine protease. The NS3/NS4A complex prevents phosphorylation of host IRF3, thus preventing the establishment of dsRNA induced antiviral state. The NS3/NS4A complex induces host amino acid transporter component SLC3A2, thus contributing to HCV propagation. Functionally, induces a specific membrane alteration that serves as a scaffold for the virus replication complex. This membrane alteration gives rise to the so-called ER-derived membranous web that contains the replication complex. NS4B self-interaction contributes to its function in membranous web formation. Promotes host TRIF protein degradation in a CASP8-dependent manner thereby inhibiting host TLR3-mediated interferon signaling. Disrupts the interaction between STING and TBK1 contributing to the inhibition of interferon signaling. Its function is as follows. Phosphorylated protein that is indispensable for viral replication and assembly. Both hypo- and hyperphosphorylated states are required for the viral life cycle. The hyperphosphorylated form of NS5A is an inhibitor of viral replication. Involved in RNA-binding and especially in binding to the viral genome. Zinc is essential for RNA-binding. Participates in the viral particle production as a result of its interaction with the mature viral core protein. Its interaction with host VAPB may target the viral replication complex to vesicles. Down-regulates viral IRES translation initiation. Mediates interferon resistance, presumably by interacting with and inhibiting host EIF2AK2/PKR. Prevents BIN1-induced apoptosis. Acts as a transcriptional activator of some host genes important for viral replication when localized in the nucleus. Via the interaction with host PACSIN2, modulates lipid droplet formation in order to promote virion assembly. Modulates TNFRSF21/DR6 signaling pathway for viral propagation. RNA-dependent RNA polymerase that performs primer-template recognition and RNA synthesis during viral replication. Initiates RNA transcription/replication at a flavin adenine dinucleotide (FAD), resulting in a 5'- FAD cap on viral RNAs. In this way, recognition of viral 5' RNA by host pattern recognition receptors can be bypassed, thereby evading activation of antiviral pathways. The sequence is that of Genome polyprotein from Homo sapiens (Human).